Reading from the N-terminus, the 372-residue chain is Cytochrome b (372 aa).

The next 4 membrane-spanning stretches (helical) occupy residues 25-45, 69-90, 105-125, and 170-190; these read FGSMLLTCLALQTSTGFFLAI, WIIQNLHAIGASMFFICIYTHI, WLSGTMLLIMLMATSFFGYVL, and FFALHFILPFMIISLSSIHII. His-75 and His-89 together coordinate heme b. Residues His-174 and His-188 each coordinate heme b. His-193 contacts a ubiquinone. The next 4 membrane-spanning stretches (helical) occupy residues 218–238, 280–300, 312–332, and 339–358; these read YKDTLMITAMITSMLIIMSFM, LGGTLALLMSILILTTAPFTH, LTQIMFWTLIVTFITITWSAT, and FIFISQTASIIYFSFFIINP.

Belongs to the cytochrome b family. As to quaternary structure, the cytochrome bc1 complex contains 3 respiratory subunits (MT-CYB, CYC1 and UQCRFS1), 2 core proteins (UQCRC1 and UQCRC2) and probably 6 low-molecular weight proteins. Heme b is required as a cofactor.

It is found in the mitochondrion inner membrane. Component of the ubiquinol-cytochrome c reductase complex (complex III or cytochrome b-c1 complex) that is part of the mitochondrial respiratory chain. The b-c1 complex mediates electron transfer from ubiquinol to cytochrome c. Contributes to the generation of a proton gradient across the mitochondrial membrane that is then used for ATP synthesis. The chain is Cytochrome b (MT-CYB) from Hydrophis semperi (Lake Taal snake).